Here is a 79-residue protein sequence, read N- to C-terminus: ATP synthase subunit c (79 aa).

Helical transmembrane passes span 11-31 (MAAA…IGIL) and 53-73 (FFIV…LGLY).

Belongs to the ATPase C chain family. In terms of assembly, F-type ATPases have 2 components, F(1) - the catalytic core - and F(0) - the membrane proton channel. F(1) has five subunits: alpha(3), beta(3), gamma(1), delta(1), epsilon(1). F(0) has three main subunits: a(1), b(2) and c(10-14). The alpha and beta chains form an alternating ring which encloses part of the gamma chain. F(1) is attached to F(0) by a central stalk formed by the gamma and epsilon chains, while a peripheral stalk is formed by the delta and b chains.

The protein resides in the cell inner membrane. Its function is as follows. F(1)F(0) ATP synthase produces ATP from ADP in the presence of a proton or sodium gradient. F-type ATPases consist of two structural domains, F(1) containing the extramembraneous catalytic core and F(0) containing the membrane proton channel, linked together by a central stalk and a peripheral stalk. During catalysis, ATP synthesis in the catalytic domain of F(1) is coupled via a rotary mechanism of the central stalk subunits to proton translocation. Key component of the F(0) channel; it plays a direct role in translocation across the membrane. A homomeric c-ring of between 10-14 subunits forms the central stalk rotor element with the F(1) delta and epsilon subunits. The protein is ATP synthase subunit c of Serratia proteamaculans (strain 568).